The sequence spans 368 residues: 2-deoxy-scyllo-inosose synthase (368 aa).

Residues D42, 72–75, 104–108, 128–129, 139–141, 150–151, and Q176 each bind NAD(+); these read EEYK, GLTGN, TT, SIK, and KN. The active site involves K141. Position 183 (E183) interacts with Co(2+). E243 is a catalytic residue. H246 and H262 together coordinate Co(2+).

The protein belongs to the sugar phosphate cyclases superfamily. DOI synthase family. Was isolated as a heterodimeric enzyme comprising of BtrC and a smaller polypeptide further identified as PdxT by sequence homology. Homodimer in solution. The cofactor is NAD(+). It depends on Co(2+) as a cofactor.

The enzyme catalyses D-glucose 6-phosphate = 2-deoxy-L-scyllo-inosose + phosphate. It functions in the pathway metabolic intermediate biosynthesis; 2-deoxystreptamine biosynthesis; 2-deoxystreptamine from D-glucose 6-phosphate: step 1/4. Its pathway is antibiotic biosynthesis; butirosin biosynthesis. Its activity is regulated as follows. Strongly inhibited by EDTA, zinc and Cu(2+). Functionally, catalyzes the intramolecular carbocycle formation from D-glucose-6-phosphate to 2-deoxy-scyllo-inosose (DOI). The protein is 2-deoxy-scyllo-inosose synthase (btrC) of Niallia circulans (Bacillus circulans).